Here is a 495-residue protein sequence, read N- to C-terminus: Cytochrome P450 monooxygenase 113 (495 aa).

The helical transmembrane segment at 2–22 (FLQIAACFTVIGLLYGLVSNL) threads the bilayer. Position 428 (Cys-428) interacts with heme.

The protein belongs to the cytochrome P450 family. Heme serves as cofactor.

The protein localises to the membrane. Its pathway is secondary metabolite biosynthesis. Cytochrome P450 monooxygenase that is able to use 4-ethoxybenzoic acid as a substrate for oxidation. In Postia placenta (strain ATCC 44394 / Madison 698-R) (Brown rot fungus), this protein is Cytochrome P450 monooxygenase 113.